The chain runs to 68 residues: Putative membrane protein insertion efficiency factor (68 aa).

Belongs to the UPF0161 family.

It is found in the cell inner membrane. Functionally, could be involved in insertion of integral membrane proteins into the membrane. The protein is Putative membrane protein insertion efficiency factor of Aquifex aeolicus (strain VF5).